Reading from the N-terminus, the 131-residue chain is L-ectoine synthase (131 aa).

This sequence belongs to the ectoine synthase family.

The enzyme catalyses (2S)-4-acetamido-2-aminobutanoate = L-ectoine + H2O. It participates in amine and polyamine biosynthesis; ectoine biosynthesis; L-ectoine from L-aspartate 4-semialdehyde: step 3/3. In terms of biological role, catalyzes the circularization of gamma-N-acetyl-alpha,gamma-diaminobutyric acid (ADABA) to ectoine (1,4,5,6-tetrahydro-2-methyl-4-pyrimidine carboxylic acid), which is an excellent osmoprotectant. This is L-ectoine synthase from Wolinella succinogenes (strain ATCC 29543 / DSM 1740 / CCUG 13145 / JCM 31913 / LMG 7466 / NCTC 11488 / FDC 602W) (Vibrio succinogenes).